The following is a 327-amino-acid chain: Fructose import binding protein FruE (327 aa).

The N-terminal stretch at 1 to 22 is a signal peptide; it reads MKNWKKAIALVASAAALVSVAA. A lipid anchor (N-palmitoyl cysteine) is attached at cysteine 23. Residue cysteine 23 is the site of S-diacylglycerol cysteine attachment.

This sequence belongs to the bacterial solute-binding protein 2 family. In terms of assembly, the complex is composed of an ATP-binding protein (FruK), two transmembrane proteins (FruF and FruG) and a solute-binding protein (FruE).

The protein resides in the cell membrane. Its function is as follows. Part of the high-affinity ABC transporter complex FruEKFG involved in fructose uptake. Can also transport ribose and xylose, with lower affinity. Binds fructose, ribose and xylose, with fructose as the preferred substrate. The protein is Fructose import binding protein FruE of Bifidobacterium longum (strain NCC 2705).